Consider the following 168-residue polypeptide: Lipoprotein signal peptidase (168 aa).

Helical transmembrane passes span 12–32 (WYWV…WVLA), 67–87 (WQRW…TIWL), and 93–113 (NMVR…GNLI). Active-site residues include Asp-123 and Asp-141. The chain crosses the membrane as a helical span at residues 136 to 156 (AFNIADAAIFIGAVLIIIDSF).

This sequence belongs to the peptidase A8 family.

The protein resides in the cell inner membrane. The enzyme catalyses Release of signal peptides from bacterial membrane prolipoproteins. Hydrolyzes -Xaa-Yaa-Zaa-|-(S,diacylglyceryl)Cys-, in which Xaa is hydrophobic (preferably Leu), and Yaa (Ala or Ser) and Zaa (Gly or Ala) have small, neutral side chains.. The protein operates within protein modification; lipoprotein biosynthesis (signal peptide cleavage). Functionally, this protein specifically catalyzes the removal of signal peptides from prolipoproteins. The chain is Lipoprotein signal peptidase from Shewanella amazonensis (strain ATCC BAA-1098 / SB2B).